The chain runs to 48 residues: uncharacterized protein (48 aa).

Positions 1–48 are disordered; that stretch reads MTKIPINIPATSGKIKFGITPSSNKSPSLSPSPSNGQLGGGRGYILEP. Positions 21 to 36 are enriched in low complexity; the sequence is PSSNKSPSLSPSPSNG. A compositionally biased stretch (gly residues) spans 37 to 48; that stretch reads QLGGGRGYILEP.

This is an uncharacterized protein from Dictyostelium discoideum (Social amoeba).